The following is a 305-amino-acid chain: MAQVKRIRRNVSGIILLDKPLGFTSNAALQKVRWLLNAEKAGHTGSLDPLATGVLPLCFGEATKFSQYLLDSDKGYETVMQMGQTTNTGDAEGEVLQTRDVTVGRADIEALLPRFRGPISQIPPMYSALKRDGQPLYKLARAGEVVEREARSVTINRLELLECEGTRARLSVGCSKGTYIRTLVEDIGEALGCGAYVAELRRTQAGPFALAQTVTLEELEQAHADGGNEALDRFLMPSDSGLQDWPMVSLSEHSAFYWLHGQAVRAPDAPQFGMVRVQDHNARFIGIGEVSEDGRIAPRRLIRSE.

D48 functions as the Nucleophile in the catalytic mechanism.

It belongs to the pseudouridine synthase TruB family. Type 1 subfamily.

It carries out the reaction uridine(55) in tRNA = pseudouridine(55) in tRNA. In terms of biological role, responsible for synthesis of pseudouridine from uracil-55 in the psi GC loop of transfer RNAs. The chain is tRNA pseudouridine synthase B from Pseudomonas putida (strain GB-1).